The following is a 737-amino-acid chain: Dual specificity protein kinase KNS1 (737 aa).

2 disordered regions span residues 1–33 and 270–290; these read MSQN…SSNK and SSLR…NKSN. Over residues 15–33 the composition is skewed to polar residues; the sequence is ANMNNSTTTGPANNTSSNK. Low complexity predominate over residues 277-290; that stretch reads SNGSSESASSNKSN. Residues 313 to 720 form the Protein kinase domain; the sequence is FVVKDLLGQG…AKDALDHEWF (408 aa). Residues 319 to 327 and Lys343 each bind ATP; that span reads LGQGTFGKV. Residue Asp440 is the Proton acceptor of the active site. At Thr562 the chain carries Phosphothreonine.

Belongs to the protein kinase superfamily. CMGC Ser/Thr protein kinase family. Lammer subfamily. Phosphorylated (auto-) on Ser/Thr/Tyr.

It carries out the reaction L-seryl-[protein] + ATP = O-phospho-L-seryl-[protein] + ADP + H(+). The catalysed reaction is L-threonyl-[protein] + ATP = O-phospho-L-threonyl-[protein] + ADP + H(+). It catalyses the reaction L-tyrosyl-[protein] + ATP = O-phospho-L-tyrosyl-[protein] + ADP + H(+). Nonessential protein kinase. In Saccharomyces cerevisiae (strain ATCC 204508 / S288c) (Baker's yeast), this protein is Dual specificity protein kinase KNS1 (KNS1).